The following is a 338-amino-acid chain: Fructose-1,6-bisphosphatase class 1 (338 aa).

Residues Glu-92, Asp-114, Leu-116, and Asp-117 each coordinate Mg(2+). Substrate contacts are provided by residues 117–120, Asn-210, Tyr-243, and Lys-276; that span reads DGSS. Residue Glu-282 participates in Mg(2+) binding.

The protein belongs to the FBPase class 1 family. Homotetramer. The cofactor is Mg(2+).

The protein localises to the cytoplasm. The enzyme catalyses beta-D-fructose 1,6-bisphosphate + H2O = beta-D-fructose 6-phosphate + phosphate. Its pathway is carbohydrate biosynthesis; gluconeogenesis. This Maridesulfovibrio salexigens (strain ATCC 14822 / DSM 2638 / NCIMB 8403 / VKM B-1763) (Desulfovibrio salexigens) protein is Fructose-1,6-bisphosphatase class 1.